We begin with the raw amino-acid sequence, 337 residues long: Transcription initiation factor IIB (337 aa).

A TFIIB-type zinc finger spans residues 37–68 (YTVECPECGSRALVRDYERAELVCSECGLVID). Zn(2+) contacts are provided by cysteine 41, cysteine 44, cysteine 60, and cysteine 63. 2 consecutive repeat copies span residues 154-237 (SELD…SREL) and 248-329 (DYIP…ELAE).

This sequence belongs to the TFIIB family.

In terms of biological role, stabilizes TBP binding to an archaeal box-A promoter. Also responsible for recruiting RNA polymerase II to the pre-initiation complex (DNA-TBP-TFIIB). The sequence is that of Transcription initiation factor IIB from Methanothrix thermoacetophila (strain DSM 6194 / JCM 14653 / NBRC 101360 / PT) (Methanosaeta thermophila).